Consider the following 656-residue polypeptide: MAKVIGIDLGTSNSAAAVVMGGKPTIIPAAEGATVGGKAFPSVVAFSKDGDLLVGEPARRQAVTNPENTIMAAKRKMGSEHIFKAGGKDYKPQQISSFILQKIKKDAEAFVGEPVGQAVITVPAYFDDNQRQATKDAGTIAGLDVVRIINEPTAASLAFGLDKSKQDMKILVFDFGGGTLDVTVMEMGGGVFEVMSTSGDTQLGGTDMDKAIIDYIVDDFRKREGVDLSQDSTALTRVREAAEKAKIELSTVMETDVNLPFISHDSSGPKNLELRLTRAKLEELVGPIIDRCRPSIEKALADAKVSPSDIAKIVMVGGPTRMPAVKKFVSSVTGKESESGVDPMEAVAMGAAIQAGIIAGDVTSDIVLLDVTPLTLGIDTLGGVREPLIERNTTIPTSKSKVFTTAVDNQTAVTIHVVQGERPMTSDNVSLGSFNLTDLPPAPRGIPQIEVKFDIDANGIINVTAKDLGTQKEAKITIESSSKLSKDEIEKLREDAEKFSDEDEKKKGKVELKNEAESFVYTAEKLINHDLKDKITQEQGIKISDGIREVKEALDQDPDILRPKLDSLKAMVNEITTEMYQQAAAQGAAGGAAGGAAGGAAGGAAGDAAGAAGDSTGDAAGAAGGPSEGPAGDAGAGESAGPEPGDDGQPKPGPAA.

Over residues 590-605 the composition is skewed to gly residues; the sequence is GGAAGGAAGGAAGGAA. The disordered stretch occupies residues 590–656; sequence GGAAGGAAGG…DGQPKPGPAA (67 aa). Low complexity predominate over residues 606–621; that stretch reads GDAAGAAGDSTGDAAG. Residues 622–635 show a composition bias toward gly residues; that stretch reads AAGGPSEGPAGDAG.

The protein belongs to the heat shock protein 70 family.

Acts as a chaperone. The polypeptide is Chaperone protein DnaK (Cenarchaeum symbiosum (strain A)).